The chain runs to 446 residues: tRNA-2-methylthio-N(6)-dimethylallyladenosine synthase (446 aa).

Positions 6-122 (RRYHITTFGC…LGDLLQQVFD (117 aa)) constitute an MTTase N-terminal domain. Residues Cys15, Cys51, Cys85, Cys157, Cys161, and Cys164 each contribute to the [4Fe-4S] cluster site. The Radical SAM core domain occupies 143–380 (RDSNITAWVN…NHLVATKAAE (238 aa)). One can recognise a TRAM domain in the interval 383–446 (QRYLGRIEEI…RPFSLTGVIF (64 aa)).

Belongs to the methylthiotransferase family. MiaB subfamily. Monomer. It depends on [4Fe-4S] cluster as a cofactor.

It localises to the cytoplasm. It catalyses the reaction N(6)-dimethylallyladenosine(37) in tRNA + (sulfur carrier)-SH + AH2 + 2 S-adenosyl-L-methionine = 2-methylsulfanyl-N(6)-dimethylallyladenosine(37) in tRNA + (sulfur carrier)-H + 5'-deoxyadenosine + L-methionine + A + S-adenosyl-L-homocysteine + 2 H(+). Catalyzes the methylthiolation of N6-(dimethylallyl)adenosine (i(6)A), leading to the formation of 2-methylthio-N6-(dimethylallyl)adenosine (ms(2)i(6)A) at position 37 in tRNAs that read codons beginning with uridine. The sequence is that of tRNA-2-methylthio-N(6)-dimethylallyladenosine synthase from Microcystis aeruginosa (strain NIES-843 / IAM M-2473).